We begin with the raw amino-acid sequence, 425 residues long: Tol-Pal system protein TolB (425 aa).

A signal peptide spans 1-23 (MQMMKKRILLCLLVGMTCLPVLA).

This sequence belongs to the TolB family. As to quaternary structure, the Tol-Pal system is composed of five core proteins: the inner membrane proteins TolA, TolQ and TolR, the periplasmic protein TolB and the outer membrane protein Pal. They form a network linking the inner and outer membranes and the peptidoglycan layer.

It is found in the periplasm. In terms of biological role, part of the Tol-Pal system, which plays a role in outer membrane invagination during cell division and is important for maintaining outer membrane integrity. The polypeptide is Tol-Pal system protein TolB (Albidiferax ferrireducens (strain ATCC BAA-621 / DSM 15236 / T118) (Rhodoferax ferrireducens)).